A 449-amino-acid polypeptide reads, in one-letter code: MFS acetylaranotin efflux transporter ataA (449 aa).

The next 7 membrane-spanning stretches (helical) occupy residues 6–26 (SVYV…TAIP), 45–65 (YLLV…YFPI), 67–87 (WVFL…GAAP), 115–135 (FYIN…FLHV), 155–175 (LGVV…QWGG), 182–202 (NGRI…FLAI), and 227–247 (LFMT…PIWF). A glycan (N-linked (GlcNAc...) asparagine) is linked at N252. 5 helical membrane passes run 260–280 (IMCL…GGGV), 287–307 (VPFF…MTTF), 321–341 (VLLG…VQAV), 349–369 (VGTA…VSVA), and 420–440 (ALVS…LGAV).

The protein belongs to the major facilitator superfamily.

The protein resides in the cell membrane. Functionally, efflux pump that may provide the dual role of acetylaranotin export and self-protection by allowing the fungus to evade the harmful effect of its own acetylaranotin production. In Aspergillus terreus (strain NIH 2624 / FGSC A1156), this protein is MFS acetylaranotin efflux transporter ataA.